A 351-amino-acid polypeptide reads, in one-letter code: Peptide chain release factor 1 (351 aa).

Glutamine 229 carries the N5-methylglutamine modification. Positions 278 to 297 (RVDDERSADRAAQVGSGDRS) are disordered.

The protein belongs to the prokaryotic/mitochondrial release factor family. Post-translationally, methylated by PrmC. Methylation increases the termination efficiency of RF1.

It localises to the cytoplasm. In terms of biological role, peptide chain release factor 1 directs the termination of translation in response to the peptide chain termination codons UAG and UAA. This Roseobacter denitrificans (strain ATCC 33942 / OCh 114) (Erythrobacter sp. (strain OCh 114)) protein is Peptide chain release factor 1.